A 91-amino-acid chain; its full sequence is uncharacterized protein (91 aa).

The helical transmembrane segment at 12–34 threads the bilayer; the sequence is FAIVYANITFLFYYLLDFTLPFH.

It localises to the membrane. This is an uncharacterized protein from Saccharomyces cerevisiae (strain ATCC 204508 / S288c) (Baker's yeast).